The primary structure comprises 336 residues: Ketol-acid reductoisomerase (NADP(+)) (336 aa).

The region spanning 1–181 (MNVYYDKDCN…GGGRTGIIET (181 aa)) is the KARI N-terminal Rossmann domain. Residues 24-27 (YGSQ), Arg-47, Ser-50, Ser-52, and 82-85 (DEFQ) each bind NADP(+). The active site involves His-107. Position 133 (Gly-133) interacts with NADP(+). In terms of domain architecture, KARI C-terminal knotted spans 182–327 (TFQDETETDL…GKLRSMMPWI (146 aa)). Mg(2+) contacts are provided by Asp-190, Glu-194, Glu-226, and Glu-230. Residue Ser-251 coordinates substrate.

Belongs to the ketol-acid reductoisomerase family. It depends on Mg(2+) as a cofactor.

The enzyme catalyses (2R)-2,3-dihydroxy-3-methylbutanoate + NADP(+) = (2S)-2-acetolactate + NADPH + H(+). The catalysed reaction is (2R,3R)-2,3-dihydroxy-3-methylpentanoate + NADP(+) = (S)-2-ethyl-2-hydroxy-3-oxobutanoate + NADPH + H(+). Its pathway is amino-acid biosynthesis; L-isoleucine biosynthesis; L-isoleucine from 2-oxobutanoate: step 2/4. The protein operates within amino-acid biosynthesis; L-valine biosynthesis; L-valine from pyruvate: step 2/4. In terms of biological role, involved in the biosynthesis of branched-chain amino acids (BCAA). Catalyzes an alkyl-migration followed by a ketol-acid reduction of (S)-2-acetolactate (S2AL) to yield (R)-2,3-dihydroxy-isovalerate. In the isomerase reaction, S2AL is rearranged via a Mg-dependent methyl migration to produce 3-hydroxy-3-methyl-2-ketobutyrate (HMKB). In the reductase reaction, this 2-ketoacid undergoes a metal-dependent reduction by NADPH to yield (R)-2,3-dihydroxy-isovalerate. This chain is Ketol-acid reductoisomerase (NADP(+)), found in Geotalea daltonii (strain DSM 22248 / JCM 15807 / FRC-32) (Geobacter daltonii).